A 425-amino-acid polypeptide reads, in one-letter code: Serine--tRNA ligase (425 aa).

L-serine is bound at residue 233-235; the sequence is TAE. 264–266 lines the ATP pocket; it reads RRE. L-serine is bound at residue Glu-287. Residue 351 to 354 coordinates ATP; it reads EISS. Ser-387 provides a ligand contact to L-serine.

The protein belongs to the class-II aminoacyl-tRNA synthetase family. Type-1 seryl-tRNA synthetase subfamily. In terms of assembly, homodimer. The tRNA molecule binds across the dimer.

The protein localises to the cytoplasm. It carries out the reaction tRNA(Ser) + L-serine + ATP = L-seryl-tRNA(Ser) + AMP + diphosphate + H(+). The enzyme catalyses tRNA(Sec) + L-serine + ATP = L-seryl-tRNA(Sec) + AMP + diphosphate + H(+). The protein operates within aminoacyl-tRNA biosynthesis; selenocysteinyl-tRNA(Sec) biosynthesis; L-seryl-tRNA(Sec) from L-serine and tRNA(Sec): step 1/1. In terms of biological role, catalyzes the attachment of serine to tRNA(Ser). Is also able to aminoacylate tRNA(Sec) with serine, to form the misacylated tRNA L-seryl-tRNA(Sec), which will be further converted into selenocysteinyl-tRNA(Sec). This Thermotoga maritima (strain ATCC 43589 / DSM 3109 / JCM 10099 / NBRC 100826 / MSB8) protein is Serine--tRNA ligase.